A 931-amino-acid polypeptide reads, in one-letter code: Adhesion G protein-coupled receptor E1 (931 aa).

Positions 1–27 (MWGFWLLLFWGFSGMYRWGMTTLPTLG) are cleaved as a signal peptide. Over 28 to 644 (QTLGGVNECQ…IMASGELTME (617 aa)) the chain is Extracellular. 2 consecutive EGF-like domains span residues 32 to 80 (GVNE…VECQ) and 81 to 132 (DVNE…FLCA). 21 cysteine pairs are disulfide-bonded: C36-C48, C42-C57, C59-C79, C85-C98, C92-C107, C109-C131, C137-C149, C143-C158, C160-C171, C177-C189, C183-C198, C200-C220, C226-C239, C233-C248, C250-C270, C276-C286, C280-C295, C297-C317, C323-C336, C330-C345, and C347-C366. The 40-residue stretch at 133–172 (DVDECLTIGICPKYSNCSNSVGSYSCTCQPGFVLNGSICE) folds into the EGF-like 3; calcium-binding domain. 2 N-linked (GlcNAc...) asparagine glycosylation sites follow: N148 and N167. The EGF-like 4; calcium-binding domain maps to 173–221 (DEDECVTRDVCPEHATCHNTLGSYYCTCNSGLESSGGGPMFQGLDESCE). The EGF-like 5; calcium-binding domain maps to 222–271 (DVDECSRNSTLCGPTFICINTLGSYSCSCPAGFSLPTFQILGHPADGNCT). A glycan (N-linked (GlcNAc...) asparagine) is linked at N229. N-linked (GlcNAc...) asparagine glycosylation is found at N269 and N283. Residues 272–318 (DIDECDDTCPLNSSCTNTIGSYFCTCHPGFASSNGQLNFKDLEVTCE) enclose the EGF-like 6; calcium-binding domain. In terms of domain architecture, EGF-like 7; calcium-binding spans 319 to 367 (DIDECTQDPLQCGLNSVCTNVPGSYICGCLPDFQMDPEGSQGYGNFNCK). N405, N417, N474, and N498 each carry an N-linked (GlcNAc...) asparagine glycan. The 161-residue stretch at 482-642 (EYLDIESKVI…AIIMASGELT (161 aa)) folds into the GAIN-B domain. Residues 506–508 (RGD) carry the Cell attachment site motif. 2 disulfide bridges follow: C595-C624 and C612-C626. The segment at 595–642 (CVSWNTDVEDGRWTPSGCEIVEASETHTVCSCNRMANLAIIMASGELT) is GPS. Residues 645–672 (FSLYIISHVGTVISLVCLALAIATFLLC) traverse the membrane as a helical segment. Residues 673–679 (RAVQNHN) lie on the Cytoplasmic side of the membrane. A helical membrane pass occupies residues 680 to 701 (TYMHLHLCVCLFLAKILFLTGI). Topologically, residues 702–711 (DKTDNQTACA) are extracellular. N706 carries N-linked (GlcNAc...) asparagine glycosylation. The chain crosses the membrane as a helical span at residues 712–735 (IIAGFLHYLFLACFFWMLVEAVML). Topologically, residues 736 to 754 (FLMVRNLKVVNYFSSRNIK) are cytoplasmic. Residues 755 to 776 (MLHLCAFGYGLPVLVVIISASV) form a helical membrane-spanning segment. The Extracellular segment spans residues 777–792 (QPRGYGMHNRCWLNTE). A helical membrane pass occupies residues 793 to 821 (TGFIWSFLGPVCMIITINSVLLAWTLWVL). At 822–839 (RQKLCSVSSEVSKLKDTR) the chain is on the cytoplasmic side. Residues 840–859 (LLTFKAIAQIFILGCSWVLG) traverse the membrane as a helical segment. The Extracellular portion of the chain corresponds to 860 to 874 (IFQIGPLASIMAYLF). Residues 875–897 (TIINSLQGAFIFLIHCLLNRQVR) traverse the membrane as a helical segment. The Cytoplasmic segment spans residues 898 to 931 (DEYKKLLTRKTDLSSHSQTSGILLSSMPSTSKMG).

The protein belongs to the G-protein coupled receptor 2 family. Adhesion G-protein coupled receptor (ADGR) subfamily. As to expression, in macrophages; but absent from those which are localized within T-cell areas of lymph nodes and spleen. Low level of expression on blood monocytes.

Its subcellular location is the cell membrane. In terms of biological role, orphan receptor involved in cell adhesion and probably in cell-cell interactions specifically involving cells of the immune system. May play a role in regulatory T-cells (Treg) development. This Mus musculus (Mouse) protein is Adhesion G protein-coupled receptor E1 (Adgre1).